The chain runs to 169 residues: MIIAVYPGTFDPLTRGHEDLVRRAATLFDKVVVGIAHSRNKKPFFTIEERVDIAREVLGHYPNVEVHSFGGLLKDFVRDQNGRVIIRGLRAVSDFEYEFQMAGMNRHLLPDVETMFMTPSDQYQFISGTIVREIAQLGGDVSKFVFPSVERWLQAKAKERREQSAQGGA.

Position 9 (Thr-9) interacts with substrate. ATP contacts are provided by residues 9–10 and His-17; that span reads TF. Residues Lys-41, Leu-73, and Arg-87 each coordinate substrate. ATP-binding positions include 88-90, Glu-98, and 123-129; these read GLR and YQFISGT.

It belongs to the bacterial CoaD family. In terms of assembly, homohexamer. Requires Mg(2+) as cofactor.

The protein resides in the cytoplasm. The enzyme catalyses (R)-4'-phosphopantetheine + ATP + H(+) = 3'-dephospho-CoA + diphosphate. It functions in the pathway cofactor biosynthesis; coenzyme A biosynthesis; CoA from (R)-pantothenate: step 4/5. Reversibly transfers an adenylyl group from ATP to 4'-phosphopantetheine, yielding dephospho-CoA (dPCoA) and pyrophosphate. The chain is Phosphopantetheine adenylyltransferase from Bordetella bronchiseptica (strain ATCC BAA-588 / NCTC 13252 / RB50) (Alcaligenes bronchisepticus).